A 1066-amino-acid chain; its full sequence is Vinculin (1066 aa).

Residues 1–835 (MPVFHTRTIE…GAVAKVREAF (835 aa)) are N-terminal globular head. Position 97 is a phosphoserine (Ser-97). The segment at 168 to 208 (MTKMAKMIDERQQELTHQEHRVMLVNSMNTVKELLPVLISA) is talin-interaction. Position 173 is an N6-acetyllysine (Lys-173). A run of 3 repeats spans residues 259–369 (ASKD…KVEN), 370–479 (AARK…KTNR), and 480–589 (AVAN…QMQE). Residues 259–589 (ASKDTEAMKR…LKDLKTQMQE (331 aa)) are 3 X 112 AA tandem repeats. Phosphoserine is present on residues Ser-260, Ser-272, Ser-275, Ser-290, Ser-346, and Ser-434. Lys-496 is modified (N6-acetyllysine). Tyr-537 carries the phosphotyrosine modification. 3 positions are modified to phosphoserine: Ser-574, Ser-579, and Ser-600. Phosphothreonine occurs at positions 604 and 672. A Phosphoserine modification is found at Ser-721. The interaction with ACTN4 stretch occupies residues 741–764 (MANIQPQMLVAGATSIARRANRIL). 2 positions are modified to phosphoserine: Ser-795 and Ser-809. Position 822 is a phosphotyrosine (Tyr-822). The linker (Pro-rich) stretch occupies residues 836 to 878 (QPQEPDFPPPPPDLEQLRLTDELAPPKPPLPEGEVPPPRPPPP). The disordered stretch occupies residues 857-887 (ELAPPKPPLPEGEVPPPRPPPPEEKDEEFPE). Pro residues predominate over residues 860 to 876 (PPKPPLPEGEVPPPRPP). The tract at residues 879–1066 (EEKDEEFPEQ…RWVRKTPWYQ (188 aa)) is C-terminal tail. Facilitates phospholipid membrane insertion regions lie at residues 935–978 (RLVR…KRIR) and 1052–1066 (AGFT…PWYQ). Position 1065 is a phosphotyrosine; by SRC-type Tyr-kinases (Tyr-1065).

The protein belongs to the vinculin/alpha-catenin family. In terms of assembly, exhibits self-association properties. Part of a complex composed of THSD1, PTK2/FAK1, TLN1 and VCL. Interacts with APBB1IP, NRAP and TLN1. Interacts with CTNNB1 and this interaction is necessary for its localization to the cell-cell junctions and for its function in regulating cell surface expression of E-cadherin. Interacts with SORBS1. Interacts with SYNM. Interacts with CTNNA1. Binds to ACTN4; this interaction triggers conformational changes. Interacts with FLII. Phosphorylated; on serines, threonines and tyrosines. Phosphorylation on Tyr-1065 in activated platelets affects head-tail interactions and cell spreading but has no effect on actin binding nor on localization to focal adhesion plaques. In terms of processing, acetylated; mainly by myristic acid but also by a small amount of palmitic acid.

It is found in the cell membrane. The protein localises to the cell junction. It localises to the adherens junction. Its subcellular location is the focal adhesion. The protein resides in the cytoplasm. It is found in the cytoskeleton. The protein localises to the sarcolemma. It localises to the cell projection. Its subcellular location is the podosome. In terms of biological role, actin filament (F-actin)-binding protein involved in cell-matrix adhesion and cell-cell adhesion. Regulates cell-surface E-cadherin expression and potentiates mechanosensing by the E-cadherin complex. May also play important roles in cell morphology and locomotion. In Rattus norvegicus (Rat), this protein is Vinculin.